A 65-amino-acid chain; its full sequence is Large ribosomal subunit protein bL35c (65 aa).

The tract at residues serine 18–valine 50 is disordered. Basic residues predominate over residues isoleucine 22 to leucine 44.

Belongs to the bacterial ribosomal protein bL35 family.

Its subcellular location is the plastid. The protein resides in the chloroplast. The polypeptide is Large ribosomal subunit protein bL35c (Porphyra purpurea (Red seaweed)).